Reading from the N-terminus, the 185-residue chain is Glycerol-3-phosphate acyltransferase 4 (185 aa).

6 helical membrane passes run 1–21 (MPLLFVLLSYLLGTFPSAYLA), 47–67 (LGRGWGLAVFVFDLAKGSLAI), 69–89 (LALAAGLSPGWVMFCGLAAVL), 113–133 (LLIATQPMLIMGGLGLLVLLF), 137–157 (VIAASAVMFGLLWLAVILYGL), and 158–178 (PGGVVAYSIGLPVVVGLTHFI).

The protein belongs to the PlsY family. Probably interacts with PlsX.

Its subcellular location is the cell membrane. The enzyme catalyses an acyl phosphate + sn-glycerol 3-phosphate = a 1-acyl-sn-glycero-3-phosphate + phosphate. The protein operates within lipid metabolism; phospholipid metabolism. Catalyzes the transfer of an acyl group from acyl-phosphate (acyl-PO(4)) to glycerol-3-phosphate (G3P) to form lysophosphatidic acid (LPA). This enzyme utilizes acyl-phosphate as fatty acyl donor, but not acyl-CoA or acyl-ACP. The chain is Glycerol-3-phosphate acyltransferase 4 from Dehalococcoides mccartyi (strain ATCC BAA-2266 / KCTC 15142 / 195) (Dehalococcoides ethenogenes (strain 195)).